The primary structure comprises 105 residues: Heat shock protein HspQ (105 aa).

The tract at residues 75-105 is disordered; sequence SELQDEHPEQPSMDELAQTIRKQLQAPRLRN.

It belongs to the HspQ family.

Its subcellular location is the cytoplasm. Involved in the degradation of certain denaturated proteins, including DnaA, during heat shock stress. The polypeptide is Heat shock protein HspQ (Escherichia coli O127:H6 (strain E2348/69 / EPEC)).